Here is a 347-residue protein sequence, read N- to C-terminus: Phosphoribosylformylglycinamidine cyclo-ligase (347 aa).

The protein belongs to the AIR synthase family.

The protein localises to the cytoplasm. The catalysed reaction is 2-formamido-N(1)-(5-O-phospho-beta-D-ribosyl)acetamidine + ATP = 5-amino-1-(5-phospho-beta-D-ribosyl)imidazole + ADP + phosphate + H(+). It participates in purine metabolism; IMP biosynthesis via de novo pathway; 5-amino-1-(5-phospho-D-ribosyl)imidazole from N(2)-formyl-N(1)-(5-phospho-D-ribosyl)glycinamide: step 2/2. The sequence is that of Phosphoribosylformylglycinamidine cyclo-ligase from Prochlorococcus marinus (strain MIT 9215).